Consider the following 55-residue polypeptide: Large ribosomal subunit protein bL33B (55 aa).

Belongs to the bacterial ribosomal protein bL33 family.

The polypeptide is Large ribosomal subunit protein bL33B (Kineococcus radiotolerans (strain ATCC BAA-149 / DSM 14245 / SRS30216)).